The chain runs to 157 residues: Heavy metal-associated isoprenylated plant protein 16 (157 aa).

Residues 2-71 form the HMA domain; sequence KQKILIRIAM…KVAFAELVSV (70 aa). Residues 73-115 form a disordered region; that stretch reads KVEPPKDGDKKPEEEKKPEEKKPEEKKPEEKKPEPCCQPWQKP. The span at 75–106 shows a compositional bias: basic and acidic residues; that stretch reads EPPKDGDKKPEEEKKPEEKKPEEKKPEEKKPE. Cys154 is modified (cysteine methyl ester). The S-farnesyl cysteine moiety is linked to residue Cys154. Positions 155–157 are cleaved as a propeptide — removed in mature form; that stretch reads RIM.

Belongs to the HIPP family.

Functionally, probable heavy-metal-binding protein. This Arabidopsis thaliana (Mouse-ear cress) protein is Heavy metal-associated isoprenylated plant protein 16.